The sequence spans 189 residues: Leucine repeat adapter protein 25 (189 aa).

A Phosphoserine modification is found at serine 28. Positions 55–81 are disordered; it reads LSRAARAPDGPRHAAGSANLGSAAGPR. The segment covering 68–79 has biased composition (low complexity); that stretch reads AAGSANLGSAAG. Residues 86 to 114 form an LRR repeat; the sequence is LDSALAALRKEMVGLRQLDMSLLCQLWGL. The interval 141–174 is disordered; sequence DSSYPPDAGLSDDDEPPDASLPPDPPPLTVPQTH. The segment covering 159-169 has biased composition (pro residues); sequence ASLPPDPPPLT. Serine 188 carries the post-translational modification Phosphoserine.

Belongs to the FAM89 family. As to quaternary structure, interacts with SKI. Interacts (via LRR repeat) with CDC42BPA (via AGC-kinase C-terminal domain) and CDC42BPB (via AGC-kinase C-terminal domain). Interacts (via LRR repeat) with LIMK1 (via LIM zinc-binding domains). Forms a tripartite complex with CDC42BPA, CDC42BPB and LIMK1.

The protein resides in the cytoplasm. It is found in the cell projection. Its subcellular location is the lamellipodium. Negatively regulates TGF-beta-induced signaling; in cooperation with SKI prevents the translocation of SMAD2 from the nucleus to the cytoplasm in response to TGF-beta. Acts as an adapter that mediates the specific recognition of LIMK1 by CDC42BPA and CDC42BPB in the lamellipodia. LRAP25-mediated CDC42BPA/CDC42BPB targeting to LIMK1 and the lamellipodium results in LIMK1 activation and the subsequent phosphorylation of CFL1 which is important for lamellipodial F-actin regulation. The protein is Leucine repeat adapter protein 25 of Rattus norvegicus (Rat).